Reading from the N-terminus, the 64-residue chain is Copper-specific metallothionein-2 (64 aa).

16 residues coordinate Cu(+): Cys-3, Cys-5, Cys-9, Cys-11, Cys-16, Cys-18, Cys-22, Cys-24, Cys-27, Cys-33, Cys-40, Cys-44, Cys-50, Cys-52, Cys-56, and Cys-58.

It belongs to the metallothionein superfamily. Type 2 family.

The metallothioneins are involved in the cellular sequestration of toxic metal ions and regulation of essential trace elements. This isoform binds exclusively copper. This Callinectes sapidus (Blue crab) protein is Copper-specific metallothionein-2.